Here is a 742-residue protein sequence, read N- to C-terminus: Synaptic vesicle glycoprotein 2A (742 aa).

An interaction with SYT1 region spans residues 1-57; sequence MEEGFRDRAAFIRGAKDIAKEVKKHAAKKVVKGLDRVQDEYSRRSYSRFEEEDDDDD. Residues 1 to 169 are Cytoplasmic-facing; it reads MEEGFRDRAA…GHGRFQWTLY (169 aa). The span at 33 to 49 shows a compositional bias: basic and acidic residues; it reads GLDRVQDEYSRRSYSRF. The disordered stretch occupies residues 33-144; it reads GLDRVQDEYS…GRGEAQRRKE (112 aa). A phosphoserine mark is found at serine 80 and serine 81. Phosphothreonine is present on threonine 84. A compositionally biased stretch (gly residues) spans 122–137; that stretch reads VRGGLSDGEGPPGGRG. Serine 127 carries the phosphoserine modification. A helical membrane pass occupies residues 170-190; that stretch reads FVLGLALMADGVEVFVVGFVL. Residues 191 to 205 lie on the Extracellular side of the membrane; it reads PSAEKDMCLSDSNKG. The helical transmembrane segment at 206-226 threads the bilayer; sequence MLGLIVYLGMMVGAFLWGGLA. Over 227-233 the chain is Cytoplasmic; that stretch reads DRLGRRQ. Residues 234-254 traverse the membrane as a helical segment; the sequence is CLLISLSVNSVFAFFSSFVQG. Residues 255–262 lie on the Extracellular side of the membrane; it reads YGTFLFCR. A helical membrane pass occupies residues 263–283; it reads LLSGVGIGGSIPIVFSYFSEF. The Cytoplasmic segment spans residues 284-294; it reads LAQEKRGEHLS. The helical transmembrane segment at 295-315 threads the bilayer; sequence WLCMFWMIGGVYAAAMAWAII. The Extracellular segment spans residues 316 to 334; it reads PHYGWSFQMGSAYQFHSWR. Residues 335-355 form a helical membrane-spanning segment; the sequence is VFVLVCAFPSVFAIGALTTQP. At 356 to 447 the chain is on the cytoplasmic side; sequence ESPRFFLENG…CFGPEYRRIT (92 aa). The residue at position 393 (serine 393) is a Phosphoserine. A helical transmembrane segment spans residues 448 to 468; that stretch reads LMMMGVWFTMSFSYYGLTVWF. Over 469 to 598 the chain is Extracellular; sequence PDMIRHLQAV…GTGEGAYMVY (130 aa). Position 480 is a phosphotyrosine (tyrosine 480). N-linked (GlcNAc...) asparagine glycans are attached at residues asparagine 498, asparagine 548, and asparagine 573. The helical transmembrane segment at 599 to 619 threads the bilayer; that stretch reads FVSFLGTLAVLPGNIVSALLM. At 620 to 626 the chain is on the cytoplasmic side; that stretch reads DKIGRLR. Residues 627–647 traverse the membrane as a helical segment; the sequence is MLAGSSVMSCVSCFFLSFGNS. The Extracellular segment spans residues 648–651; sequence ESAM. Residues 652 to 672 traverse the membrane as a helical segment; sequence IALLCLFGGVSIASWNALDVL. At 673–690 the chain is on the cytoplasmic side; that stretch reads TVGLYPSDKRTTAFGFLN. The helical transmembrane segment at 691 to 711 threads the bilayer; the sequence is ALCKLAAVLGISIFTSFVGIT. A topological domain (extracellular) is located at residue lysine 712. Residues 713–733 traverse the membrane as a helical segment; it reads AAPIPFASAALALGSSLALKL. The Cytoplasmic portion of the chain corresponds to 734 to 742; the sequence is PETRGQVLQ.

The protein belongs to the major facilitator superfamily. Interacts with SYT1/synaptotagmin-1 in a calcium-dependent manner. Binds the adapter protein complex AP-2. Phosphorylation by CK1 of the N-terminal cytoplasmic domain regulates interaction with SYT1. Post-translationally, N-glycosylated.

The protein localises to the presynapse. It localises to the cytoplasmic vesicle. Its subcellular location is the secretory vesicle. The protein resides in the synaptic vesicle membrane. Its function is as follows. Plays a role in the control of regulated secretion in neural and endocrine cells, enhancing selectively low-frequency neurotransmission. Positively regulates vesicle fusion by maintaining the readily releasable pool of secretory vesicles. The chain is Synaptic vesicle glycoprotein 2A (SV2A) from Macaca fascicularis (Crab-eating macaque).